We begin with the raw amino-acid sequence, 123 residues long: Large ribosomal subunit protein bL12 (123 aa).

Belongs to the bacterial ribosomal protein bL12 family. Homodimer. Part of the ribosomal stalk of the 50S ribosomal subunit. Forms a multimeric L10(L12)X complex, where L10 forms an elongated spine to which 2 to 4 L12 dimers bind in a sequential fashion. Binds GTP-bound translation factors.

In terms of biological role, forms part of the ribosomal stalk which helps the ribosome interact with GTP-bound translation factors. Is thus essential for accurate translation. This is Large ribosomal subunit protein bL12 from Maricaulis maris (strain MCS10) (Caulobacter maris).